Here is a 561-residue protein sequence, read N- to C-terminus: MAVYVNSTTGPPSSVVRNSAGFHPSIWGDTFIPSGNSAVQKTDVDRKEEENLQLLKQEVKKMLTAGDTCQQDLICLIDDIQRLGLSYHFEAEIDTLLQHVKDSYLEYYGTKNHDNLHDVALSFRLLRQEGHNISSDVFSKFQDSDGKFNEKLVKDVRGMLSLFEAAHLSVHGENILEDALEFTTSHLNSYLNSNPNAPLADLVRRALKYPLRKSFNRMVARHYISIYHKYYWHKQVLLDLAKCDFNLVQKVHQKELGYITRWWKDLDFTNKLPFARDRVVECYFWITGVYFEPRYAAPRKFLTKVISLTSIIDDIYDVYGTPEELVQLTDAIDKWDINILDQLPEYMRHAYKPLLDVFAEGEEEMAKEGLPTYGVDYAKEAFKRLTVTYLHEAKWLQAQYFPTFEEYMSVALVSGAVKMLSVSSFVRMGNIATREAFEWLSKDPLIVNGLSVICRLSDDIVGHEFENQRPHIPSAVECYMKSHHVTKETAYAELRKPIINAWKDMNEECLQPEAPPKPLLERVFNLARVINFLYDGHDGYTHSSTRTKDMITSVLINPIPA.

Asp313, Asp317, Asp458, and Glu466 together coordinate Mg(2+). Positions 313-317 match the DDXXD motif motif; it reads DDIYD.

The protein belongs to the terpene synthase family. Tpsa subfamily. Requires Mn(2+) as cofactor. It depends on Mg(2+) as a cofactor.

Its subcellular location is the cytoplasm. It catalyses the reaction (2E,6E)-farnesyl diphosphate + H2O = kunzeaol + diphosphate. The protein operates within secondary metabolite biosynthesis; terpenoid biosynthesis. Involved in the biosynthesis of kunzeaol. Produces mainly (-)-germacrene D along with gamma-cadinene. The sequence is that of Sesquiterpene synthase 2 (STS2) from Thapsia garganica (Deadly carrot).